The following is a 746-amino-acid chain: Exostosin-1 (746 aa).

Residues 1-5 (MQAKK) are Cytoplasmic-facing. Residues 6–26 (RYFILLSAGSCLALLFYFGGV) form a helical; Signal-anchor for type II membrane protein membrane-spanning segment. Residues 27–746 (QFRASRSHSR…RKKYRDIERL (720 aa)) are Lumenal-facing. Residue Asn-89 is glycosylated (N-linked (GlcNAc...) asparagine). 2 disulfides stabilise this stretch: Cys-98/Cys-103 and Cys-109/Cys-152. Residues Leu-166 and Tyr-203 each coordinate a protein. Positions 267, 269, 271, and 280 each coordinate UDP. A disulfide bridge links Cys-298 with Cys-312. Residue His-300 coordinates a protein. Residues Tyr-319 and Tyr-324 each contribute to the UDP site. N-linked (GlcNAc...) asparagine glycosylation occurs at Asn-330. 2 cysteine pairs are disulfide-bonded: Cys-334/Cys-355 and Cys-652/Cys-704. Positions 346 and 349 each coordinate UDP.

Belongs to the glycosyltransferase 47 family. As to quaternary structure, part of the heparan sulfate polymerase, a dimeric complex composed of EXT1 and EXT2. Could also form homooligomeric complexes. Interacts with NDST1. Post-translationally, N-glycosylated.

It is found in the golgi apparatus membrane. Its subcellular location is the golgi apparatus. It localises to the cis-Golgi network membrane. The protein localises to the endoplasmic reticulum membrane. It carries out the reaction 3-O-{alpha-D-GlcNAc-[(1-&gt;4)-beta-D-GlcA-(1-&gt;4)-alpha-D-GlcNAc](n)-(1-&gt;4)-beta-D-GlcA-(1-&gt;3)-beta-D-Gal-(1-&gt;3)-beta-D-Gal-(1-&gt;4)-beta-D-Xyl}-L-seryl-[protein] + UDP-alpha-D-glucuronate = 3-O-{[(1-&gt;4)-beta-D-GlcA-(1-&gt;4)-alpha-D-GlcNAc](n+1)-(1-&gt;4)-beta-D-GlcA-(1-&gt;3)-beta-D-Gal-(1-&gt;3)-beta-D-Gal-(1-&gt;4)-beta-D-Xyl}-L-seryl-[protein] + UDP + H(+). It participates in protein modification; protein glycosylation. Functionally, glycosyltransferase forming with EXT2 the heterodimeric heparan sulfate polymerase which catalyzes the elongation of the heparan sulfate glycan backbone. Glycan backbone extension consists in the alternating transfer of (1-&gt;4)-beta-D-GlcA and (1-&gt;4)-alpha-D-GlcNAc residues from their respective UDP-sugar donors. Both EXT1 and EXT2 are required for the full activity of the polymerase since EXT1 bears the N-acetylglucosaminyl-proteoglycan 4-beta-glucuronosyltransferase activity within the complex while EXT2 carries the glucuronosyl-N-acetylglucosaminyl-proteoglycan 4-alpha-N-acetylglucosaminyltransferase activity. Heparan sulfate proteoglycans are ubiquitous components of the extracellular matrix and play an important role in tissue homeostasis and signaling. In Cricetulus griseus (Chinese hamster), this protein is Exostosin-1.